The following is a 493-amino-acid chain: Involucrin (493 aa).

3 disordered regions span residues 1–47 (MSQQ…CQKV), 60–123 (EEKH…GQLE), and 139–493 (KRDE…GQHE). The span at 76-89 (EQQQPQEQELQQQH) shows a compositional bias: low complexity. Composition is skewed to basic and acidic residues over residues 90-116 (WEQDKEHQKAENPEQQLKQEKVQREKQ), 139-151 (KRDEQLGTKKEQL), 161-174 (QLKHLEQEEGHLEL), 184-193 (NLEHQEKPLE), and 201-213 (QLKHLEQQEKPLE). Polar residues predominate over residues 228–240 (QEGQSELPEQQRG). Basic and acidic residues-rich tracts occupy residues 250–270 (GQLKHLEEQKGQLKHLEHEEG), 282–360 (KHLE…HEGQ), 372–386 (KHLEQEEKQLEHPEQ), 411–431 (KHLEQQEKQLEHPQQQEEQLK), and 439–450 (QLKDLEQQERQL). The segment covering 473 to 493 (GEVLLPVEQQQQKQEVQGQHE) has biased composition (low complexity).

It belongs to the involucrin family. In terms of assembly, directly or indirectly cross-linked to cornifelin (CNFN). Substrate of transglutaminase. Specific glutamines or lysines are cross-linked to keratins, desmoplakin and to inter involucrin molecules. As to expression, keratinocytes of epidermis and other stratified squamous epithelia.

Its subcellular location is the cytoplasm. In terms of biological role, part of the insoluble cornified cell envelope (CE) of stratified squamous epithelia. In Saguinus oedipus (Cotton-top tamarin), this protein is Involucrin (IVL).